Here is a 178-residue protein sequence, read N- to C-terminus: MANFDYYSFRVEYVTKHINKEIEFYTQTEYNLEKPISEYVSYLGTRIGKDRQEQTVISQYDIYGNKQEIKKMNLNEYAKDMEVMMFKKPWTKLKPFHKIMKIKTYIDTLSYDKKIKEDVISKNKEELIDEITKGLTEKKFGTKNKSEIVYDLDKMEITNISCVDYDKKKKLYYIDWDL.

This is an uncharacterized protein from Acanthamoeba polyphaga mimivirus (APMV).